We begin with the raw amino-acid sequence, 254 residues long: MNRKRRLLASEAFGVKRRRAPGPVRADPLRTRAGSAREAIEELVKLFPRGLFEDALPPIALRSQVYSLVPDRTVADLQLKELQELGEIRIIQLGFDLDAHGIVFTEDYRTRVLKACDGRPCAGAVQKFLASVLPACGDLSFQQDQMTQTYGFRDPEITQLVNAGVLTVRDAGSWWLAVPGAGRFIKCFVKGRQAVLSMVRKAKYRELALSELLGRRAPLAVRLGLAYHVHDLIGAQLVDCVPTTSGTLLRLPDT.

The Bipartite nuclear localization signal motif lies at 4–21 (KRRLLASEAFGVKRRRAP). 3 winged helix domain regions span residues 32–104 (RAGS…GIVF), 120–179 (PCAG…LAVP), and 180–254 (GAGR…LPDT).

The protein belongs to the STK19 family. Monomer in solution. Homodimer; when bound to DNA. Component of a transcription-coupled nucleotide excision repair (TC-NER) complex composed of STK19, ERCC6, ERCC8, DDA1, DDB1, ELOF1 and UVSSA which assembles and interacts with the multiprotein RNA polymerase II complex when it stalls at DNA lesions.

The protein resides in the nucleus. In terms of biological role, DNA-binding protein which is required for efficient transcription-coupled nucleotide excision repair (TC-NER). Acts as part of a TC-NER complex which assembles and interacts with RNA polymerase II (RNAPII) when it stalls at DNA lesions. TC-NER complex subunit UVSSA binds to the GTF2H1/p62 subunit of the TFIIH transcription factor complex, tethering TFIIH to the TC-NER complex. WHR1/STK19 then interacts with the XPD helicase subunit of TFIIH which guides TFIIH to DNA downstream of the stalled RNAPII, ensuring DNA repair. Directly interacts with RNAPII and also binds to downstream DNA. Promotes the timely removal of DNA damage-stalled RNAPII, allowing downstream NER factors to access DNA lesions. Required for monoubiquitination of UVSSA. Regulates repositioning and stabilization of UVSSA within the TC-NER complex. Stimulates ubiquitination of RNAPII complex member RBP1. Also binds to RNA and regulates the expression levels of many mRNAs. The sequence is that of Winged helix repair factor 1 from Mus musculus (Mouse).